A 127-amino-acid polypeptide reads, in one-letter code: Protein ApaG (127 aa).

One can recognise an ApaG domain in the interval 2-127 (SELVEHIQVH…FRLAGPNQVH (126 aa)).

The polypeptide is Protein ApaG (Chromohalobacter salexigens (strain ATCC BAA-138 / DSM 3043 / CIP 106854 / NCIMB 13768 / 1H11)).